A 61-amino-acid polypeptide reads, in one-letter code: uncharacterized protein (61 aa).

Residues 10–61 (YEEENDNEDFEEEVELSREDLNQIINELAPFLIKLLTDLTELTQKKEESENE) are a coiled coil.

This is an uncharacterized protein from Acidianus bottle-shaped virus (isolate Italy/Pozzuoli) (ABV).